The sequence spans 147 residues: uncharacterized protein (147 aa).

The next 2 helical transmembrane spans lie at Tyr-4–Gly-26 and Tyr-123–Phe-145.

It localises to the cell membrane. This is an uncharacterized protein from Treponema pallidum (strain Nichols).